The chain runs to 641 residues: RING finger containing E3 ubiquitin-protein ligase WSV403 (641 aa).

An RING-type; atypical zinc finger spans residues 329-371; that stretch reads CVGCLYDIEDEKRCYKLPCGHFMHTFCLSNKCSKANFRCVKCF.

The enzyme catalyses S-ubiquitinyl-[E2 ubiquitin-conjugating enzyme]-L-cysteine + [acceptor protein]-L-lysine = [E2 ubiquitin-conjugating enzyme]-L-cysteine + N(6)-ubiquitinyl-[acceptor protein]-L-lysine.. The protein operates within protein modification; protein ubiquitination. In terms of biological role, probable E3 ubiquitin-protein ligase which accepts ubiquitin from an E2 ubiquitin-conjugating enzyme in the form of a thioester and then directly transfers the ubiquitin to targeted substrates. In White spot syndrome virus (isolate Shrimp/China/Tongan/1996) (WSSV), this protein is RING finger containing E3 ubiquitin-protein ligase WSV403.